The chain runs to 180 residues: Large ribosomal subunit protein uL6 (180 aa).

This sequence belongs to the universal ribosomal protein uL6 family. As to quaternary structure, part of the 50S ribosomal subunit.

This protein binds to the 23S rRNA, and is important in its secondary structure. It is located near the subunit interface in the base of the L7/L12 stalk, and near the tRNA binding site of the peptidyltransferase center. The protein is Large ribosomal subunit protein uL6 of Christiangramia forsetii (strain DSM 17595 / CGMCC 1.15422 / KT0803) (Gramella forsetii).